A 227-amino-acid polypeptide reads, in one-letter code: Probable cell wall protein PGA42 (227 aa).

A signal peptide spans 1 to 16 (MKFIILLFALIHITVA). The N-linked (GlcNAc...) asparagine glycan is linked to asparagine 192. Residue serine 200 is the site of GPI-anchor amidated serine attachment. A propeptide spans 201-227 (GSQIFVLCVISVVGFIFFFLFFLSLFV) (removed in mature form).

It belongs to the IHD1 family. In terms of processing, the GPI-anchor is attached to the protein in the endoplasmic reticulum and serves to target the protein to the cell surface. There, the glucosamine-inositol phospholipid moiety is cleaved off and the GPI-modified mannoprotein is covalently attached via its lipidless GPI glycan remnant to the 1,6-beta-glucan of the outer cell wall layer.

It is found in the secreted. The protein resides in the cell wall. Its subcellular location is the membrane. Its function is as follows. Probable GPI-anchored cell wall protein that may be involved in cell wall organization, hyphal growth, as well as in virulence. In Candida albicans (strain SC5314 / ATCC MYA-2876) (Yeast), this protein is Probable cell wall protein PGA42 (PGA42).